A 346-amino-acid chain; its full sequence is Methylthioribose-1-phosphate isomerase (346 aa).

Substrate-binding positions include 54-56 (RGA), arginine 91, and glutamine 192. The active-site Proton donor is the aspartate 233. Residue 243–244 (NK) coordinates substrate.

The protein belongs to the eIF-2B alpha/beta/delta subunits family. MtnA subfamily.

The catalysed reaction is 5-(methylsulfanyl)-alpha-D-ribose 1-phosphate = 5-(methylsulfanyl)-D-ribulose 1-phosphate. The protein operates within amino-acid biosynthesis; L-methionine biosynthesis via salvage pathway; L-methionine from S-methyl-5-thio-alpha-D-ribose 1-phosphate: step 1/6. Its function is as follows. Catalyzes the interconversion of methylthioribose-1-phosphate (MTR-1-P) into methylthioribulose-1-phosphate (MTRu-1-P). The polypeptide is Methylthioribose-1-phosphate isomerase (Yersinia enterocolitica serotype O:8 / biotype 1B (strain NCTC 13174 / 8081)).